A 603-amino-acid chain; its full sequence is Elongation factor 4 (603 aa).

In terms of domain architecture, tr-type G spans 7-191 (DNIRNFSIVA…AIVTRLPPPK (185 aa)). GTP contacts are provided by residues 19 to 24 (DHGKST) and 138 to 141 (NKVD).

The protein belongs to the TRAFAC class translation factor GTPase superfamily. Classic translation factor GTPase family. LepA subfamily.

It localises to the cell inner membrane. It catalyses the reaction GTP + H2O = GDP + phosphate + H(+). Functionally, required for accurate and efficient protein synthesis under certain stress conditions. May act as a fidelity factor of the translation reaction, by catalyzing a one-codon backward translocation of tRNAs on improperly translocated ribosomes. Back-translocation proceeds from a post-translocation (POST) complex to a pre-translocation (PRE) complex, thus giving elongation factor G a second chance to translocate the tRNAs correctly. Binds to ribosomes in a GTP-dependent manner. The sequence is that of Elongation factor 4 from Rhodopseudomonas palustris (strain ATCC BAA-98 / CGA009).